Consider the following 190-residue polypeptide: Elongation factor P (190 aa).

Belongs to the elongation factor P family.

The protein resides in the cytoplasm. The protein operates within protein biosynthesis; polypeptide chain elongation. Functionally, involved in peptide bond synthesis. Stimulates efficient translation and peptide-bond synthesis on native or reconstituted 70S ribosomes in vitro. Probably functions indirectly by altering the affinity of the ribosome for aminoacyl-tRNA, thus increasing their reactivity as acceptors for peptidyl transferase. The polypeptide is Elongation factor P (Sulfurihydrogenibium sp. (strain YO3AOP1)).